We begin with the raw amino-acid sequence, 335 residues long: Phospho-N-acetylmuramoyl-pentapeptide-transferase (335 aa).

The next 10 membrane-spanning stretches (helical) occupy residues 3–23 (LTILAGLIAFAVTALAMPHFI), 53–73 (GGTVFLLVATSLSFVFALVYF), 78–98 (SLGLISGILLIVLIYGIIGFL), 118–138 (FTFQIVGGLVFYVIHVMPSGI), 143–163 (VFGYHWHLGFLYLCFVLFWVV), 174–194 (GIDGLASVSVVISLLAYGVIA), 200–220 (FDVLLLIGIMVGALLAFFLFN), 226–246 (IFMGDVGSLALGAMLAAISIA), 251–271 (WTLLVIGIVYVLETSSVMLQV), and 314–334 (VDAFLWALGLVASLIVLAILY).

This sequence belongs to the glycosyltransferase 4 family. MraY subfamily. Mg(2+) serves as cofactor.

Its subcellular location is the cell membrane. It carries out the reaction UDP-N-acetyl-alpha-D-muramoyl-L-alanyl-gamma-D-glutamyl-L-lysyl-D-alanyl-D-alanine + di-trans,octa-cis-undecaprenyl phosphate = Mur2Ac(oyl-L-Ala-gamma-D-Glu-L-Lys-D-Ala-D-Ala)-di-trans,octa-cis-undecaprenyl diphosphate + UMP. Its pathway is cell wall biogenesis; peptidoglycan biosynthesis. In terms of biological role, catalyzes the initial step of the lipid cycle reactions in the biosynthesis of the cell wall peptidoglycan: transfers peptidoglycan precursor phospho-MurNAc-pentapeptide from UDP-MurNAc-pentapeptide onto the lipid carrier undecaprenyl phosphate, yielding undecaprenyl-pyrophosphoryl-MurNAc-pentapeptide, known as lipid I. The chain is Phospho-N-acetylmuramoyl-pentapeptide-transferase from Streptococcus equi subsp. equi (strain 4047).